We begin with the raw amino-acid sequence, 147 residues long: CLAVATA3/ESR (CLE)-related protein 4C (147 aa).

Residues Met1–Ala21 form the signal peptide. Positions Ala21–Met83 are required for secretion from the host cytoplasm to the host apoplasm. A glycan (N-linked (GlcNAc...) asparagine) is linked at Asn32. 2 disordered regions span residues Gly57–Pro86 and Arg116–His147. The segment covering His125–Val137 has biased composition (basic and acidic residues). The CLE motif lies at Arg136–His147.

This sequence belongs to the CLV3/ESR signal peptide family. Highly expressed exclusively within the dorsal esophageal gland cell during syncytium formation in host plants.

Its subcellular location is the secreted. The protein localises to the host cytoplasm. It is found in the host extracellular space. It localises to the extracellular space. The protein resides in the apoplast. In terms of biological role, mimics host plant CLE extracellular signal peptides that regulate cell fate. May play a role in the differentiation or division of feeding cells (syncytia) induced in plant roots during infection. This chain is CLAVATA3/ESR (CLE)-related protein 4C (CLE-4C), found in Globodera rostochiensis (Golden nematode worm).